A 148-amino-acid chain; its full sequence is uncharacterized protein (148 aa).

Residues 55-148 are disordered; the sequence is KMRCGESGAG…RNQGQLYPQP (94 aa). The segment covering 68 to 104 has biased composition (polar residues); the sequence is RSNSAEVSSSQPALASKSQSKWGPTSNNPRGALTTTE.

This is an uncharacterized protein from Homo sapiens (Human).